Here is a 149-residue protein sequence, read N- to C-terminus: MMVMDLSLQRRLAASVLKCGENRVWFDPAALEDIATAATKQDIRELIEQGVIKRKPVNGVSRARINKRKLQKRKGRRRGHGSRKGAKGARMPRKRMWILRIRALRKALRQMKAEGVVDRRTYRILYRKAKGGEFRSVAHLKIYVEQMKR.

A disordered region spans residues 67–90; the sequence is KRKLQKRKGRRRGHGSRKGAKGAR.

Belongs to the eukaryotic ribosomal protein eL19 family. As to quaternary structure, part of the 50S ribosomal subunit.

Binds to the 23S rRNA. This is Large ribosomal subunit protein eL19 from Archaeoglobus fulgidus (strain ATCC 49558 / DSM 4304 / JCM 9628 / NBRC 100126 / VC-16).